A 261-amino-acid polypeptide reads, in one-letter code: DNA repair protein RecO (261 aa).

Belongs to the RecO family.

Functionally, involved in DNA repair and RecF pathway recombination. This Limosilactobacillus reuteri (strain DSM 20016) (Lactobacillus reuteri) protein is DNA repair protein RecO.